The chain runs to 235 residues: MVVEDSMKATSAEDLSNSIANQNPRGRGGDEDEELEEGEIVGDDDLDSSNLSASLVHQPHPLEHSWTFWFDNPSAKSKQATWGASIRPIYTFSTVEEFWSVYNNIHHPSKLAMRADLYCFKHKIEPKWEDPVCANGGKWTVNFPRGKSDNGWLYTLLAMIGEQFDCGDEICGAVVNVRSGQDKISIWTKNASNEAAQASIGKQWKEFLDYNESIGFIFHDDAKKFDRHAKNKYMV.

The tract at residues 1-52 is disordered; that stretch reads MVVEDSMKATSAEDLSNSIANQNPRGRGGDEDEELEEGEIVGDDDLDSSNLS. The span at 13 to 24 shows a compositional bias: polar residues; it reads EDLSNSIANQNP. Residues 30–47 are compositionally biased toward acidic residues; that stretch reads DEDEELEEGEIVGDDDLD. EIF4G-binding stretches follow at residues 60-63 and 70-106; these read HPLE and FDNPSAKSKQATWGASIRPIYTFSTVEEFWSVYNNIH. Residues 78 to 83, lysine 110, and 128 to 129 contribute to the mRNA site; these read KQATWG and WE. A disulfide bridge links cysteine 133 with cysteine 171. The interval 154-163 is EIF4G-binding; it reads YTLLAMIGEQ. MRNA contacts are provided by residues 178 to 183 and 223 to 227; these read RSGQDK and KKFDR.

The protein belongs to the eukaryotic initiation factor 4E family. In terms of assembly, EIF4F is a multi-subunit complex, the composition of which varies with external and internal environmental conditions. It is composed of at least EIF4A, EIF4E and EIF4G. EIF4E is also known to interact with other partners. Interacts directly with eIF4G. In higher plants two isoforms of EIF4F have been identified, named isoform EIF4F and isoform EIF(iso)4F. Isoform EIF4F has subunits p220 and p26, whereas isoform EIF(iso)4F has subunits p82 and p28. As to quaternary structure, (Microbial infection) Interacts with potyvirus viral genome-linked protein (VPg); this interaction is possible in susceptible hosts but impaired in resistant plants. In terms of processing, according to the redox status, the Cys-133-Cys-171 disulfide bridge may have a role in regulating protein function by affecting its ability to bind capped mRNA.

It is found in the nucleus. The protein localises to the cytoplasm. In terms of biological role, component of the protein complex eIF4F, which is involved in the recognition of the mRNA cap, ATP-dependent unwinding of 5'-terminal secondary structure and recruitment of mRNA to the ribosome. Recognizes and binds the 7-methylguanosine-containing mRNA cap during an early step in the initiation of protein synthesis and facilitates ribosome binding by inducing the unwinding of the mRNAs secondary structures. Key component of recessive resistance to potyviruses and Tombusviridae genus Carmovirus such as melon necrotic spot virus (MNSV). Functionally, (Microbial infection) Susceptibility host factor required for viral infection by recruiting viral RNAs, including uncapped and non-polyadenylated RNA, to the host ribosomal complex via an interaction with viral genome-linked protein (VPg). The protein is Eukaryotic translation initiation factor 4E-1 of Cucumis melo (Muskmelon).